Here is a 206-residue protein sequence, read N- to C-terminus: LexA repressor (206 aa).

The H-T-H motif DNA-binding region spans Arg28 to Lys48. Catalysis depends on for autocatalytic cleavage activity residues Ser122 and Lys160.

The protein belongs to the peptidase S24 family. As to quaternary structure, homodimer.

It catalyses the reaction Hydrolysis of Ala-|-Gly bond in repressor LexA.. In terms of biological role, represses a number of genes involved in the response to DNA damage (SOS response), including recA and lexA. In the presence of single-stranded DNA, RecA interacts with LexA causing an autocatalytic cleavage which disrupts the DNA-binding part of LexA, leading to derepression of the SOS regulon and eventually DNA repair. In Tolumonas auensis (strain DSM 9187 / NBRC 110442 / TA 4), this protein is LexA repressor.